A 30-amino-acid polypeptide reads, in one-letter code: Uperin-6.2 (30 aa).

In terms of tissue distribution, expressed by the skin dorsal glands.

The protein localises to the secreted. The protein is Uperin-6.2 of Uperoleia inundata (Floodplain toadlet).